The sequence spans 309 residues: Tagatose-6-phosphate kinase (309 aa).

This sequence belongs to the carbohydrate kinase PfkB family. LacC subfamily.

The enzyme catalyses D-tagatofuranose 6-phosphate + ATP = D-tagatofuranose 1,6-bisphosphate + ADP + H(+). The protein operates within carbohydrate metabolism; D-tagatose 6-phosphate degradation; D-glyceraldehyde 3-phosphate and glycerone phosphate from D-tagatose 6-phosphate: step 1/2. This chain is Tagatose-6-phosphate kinase, found in Streptococcus pyogenes serotype M5 (strain Manfredo).